We begin with the raw amino-acid sequence, 226 residues long: Putative ABC transporter ATP-binding protein BH02760 (226 aa).

Positions 4–222 (IKFDKVTQVF…IPLVAIKEYI (219 aa)) constitute an ABC transporter domain. An ATP-binding site is contributed by 35–42 (GANGSGKS).

This sequence belongs to the ABC transporter superfamily.

The protein resides in the cell inner membrane. Functionally, probably part of an ABC transporter complex. Responsible for energy coupling to the transport system. The chain is Putative ABC transporter ATP-binding protein BH02760 from Bartonella henselae (strain ATCC 49882 / DSM 28221 / CCUG 30454 / Houston 1) (Rochalimaea henselae).